The primary structure comprises 1372 residues: DNA-directed RNA polymerase subunit beta' (1372 aa).

Zn(2+) contacts are provided by cysteine 69, cysteine 71, cysteine 84, and cysteine 87. 3 residues coordinate Mg(2+): aspartate 460, aspartate 462, and aspartate 464. The Zn(2+) site is built by cysteine 808, cysteine 882, cysteine 889, and cysteine 892.

This sequence belongs to the RNA polymerase beta' chain family. As to quaternary structure, the RNAP catalytic core consists of 2 alpha, 1 beta, 1 beta' and 1 omega subunit. When a sigma factor is associated with the core the holoenzyme is formed, which can initiate transcription. Requires Mg(2+) as cofactor. The cofactor is Zn(2+).

The catalysed reaction is RNA(n) + a ribonucleoside 5'-triphosphate = RNA(n+1) + diphosphate. In terms of biological role, DNA-dependent RNA polymerase catalyzes the transcription of DNA into RNA using the four ribonucleoside triphosphates as substrates. This is DNA-directed RNA polymerase subunit beta' from Rickettsia conorii (strain ATCC VR-613 / Malish 7).